A 278-amino-acid polypeptide reads, in one-letter code: 3-methyl-2-oxobutanoate hydroxymethyltransferase (278 aa).

Mg(2+)-binding residues include Asp-43 and Asp-82. Residues Asp-43–Ser-44, Asp-82, and Lys-112 each bind 3-methyl-2-oxobutanoate. Residue Glu-114 coordinates Mg(2+). Glu-181 serves as the catalytic Proton acceptor.

It belongs to the PanB family. As to quaternary structure, homodecamer; pentamer of dimers. Requires Mg(2+) as cofactor.

The protein resides in the cytoplasm. It carries out the reaction 3-methyl-2-oxobutanoate + (6R)-5,10-methylene-5,6,7,8-tetrahydrofolate + H2O = 2-dehydropantoate + (6S)-5,6,7,8-tetrahydrofolate. The protein operates within cofactor biosynthesis; (R)-pantothenate biosynthesis; (R)-pantoate from 3-methyl-2-oxobutanoate: step 1/2. Its function is as follows. Catalyzes the reversible reaction in which hydroxymethyl group from 5,10-methylenetetrahydrofolate is transferred onto alpha-ketoisovalerate to form ketopantoate. The sequence is that of 3-methyl-2-oxobutanoate hydroxymethyltransferase from Bacillus cereus (strain ATCC 14579 / DSM 31 / CCUG 7414 / JCM 2152 / NBRC 15305 / NCIMB 9373 / NCTC 2599 / NRRL B-3711).